We begin with the raw amino-acid sequence, 274 residues long: WIMGHMVNAIEQVDEFLDLGANAIEFDIDFDKDGIAQITHHGIPCDCGRKCTKKAIFTEYLDNIRQVTTPDDPKFREQLVLLALDLKLQRISSAKAYRAGEDVAKKLLDHYWQRGNSRARAYILLNIPLVEDYEFIRAFKDTLKNEGYESYNDKVGINSAGNEDLDKIRDVLEILGIHKQVWQADGITSCFARGTERLKEALEKRDTPGYNYINKVYAWTLVRKSIMRRSLRLGVDGVMSNNPDRVIKVLKEKEFADKFRLATYNDNPWEKFRG.

The active site involves His5. Positions 25 and 27 each coordinate Mg(2+). His41 functions as the Nucleophile in the catalytic mechanism. 2 disulfide bridges follow: Cys45–Cys51 and Cys47–Cys190. Asp85 is a Mg(2+) binding site.

Belongs to the arthropod phospholipase D family. Class II subfamily. Mg(2+) is required as a cofactor. As to expression, expressed by the venom gland.

The protein resides in the secreted. It carries out the reaction an N-(acyl)-sphingosylphosphocholine = an N-(acyl)-sphingosyl-1,3-cyclic phosphate + choline. The enzyme catalyses an N-(acyl)-sphingosylphosphoethanolamine = an N-(acyl)-sphingosyl-1,3-cyclic phosphate + ethanolamine. It catalyses the reaction a 1-acyl-sn-glycero-3-phosphocholine = a 1-acyl-sn-glycero-2,3-cyclic phosphate + choline. The catalysed reaction is a 1-acyl-sn-glycero-3-phosphoethanolamine = a 1-acyl-sn-glycero-2,3-cyclic phosphate + ethanolamine. Functionally, dermonecrotic toxins cleave the phosphodiester linkage between the phosphate and headgroup of certain phospholipids (sphingolipid and lysolipid substrates), forming an alcohol (often choline) and a cyclic phosphate. This toxin acts on sphingomyelin (SM). It may also act on ceramide phosphoethanolamine (CPE), lysophosphatidylcholine (LPC) and lysophosphatidylethanolamine (LPE), but not on lysophosphatidylserine (LPS), and lysophosphatidylglycerol (LPG). It acts by transphosphatidylation, releasing exclusively cyclic phosphate products as second products. Induces dermonecrosis, hemolysis, increased vascular permeability, edema, inflammatory response, and platelet aggregation. This is Dermonecrotic toxin SdSicTox-betaIIB1bxii from Sicarius cf. damarensis (strain GJB-2008) (Six-eyed sand spider).